Consider the following 105-residue polypeptide: Nitrogen fixation nifHD1 region GlnB-like protein 1 (105 aa).

It belongs to the P(II) protein family.

Functionally, could be involved in the regulation of nitrogen fixation. This chain is Nitrogen fixation nifHD1 region GlnB-like protein 1 (glnBA), found in Methanosarcina barkeri.